The sequence spans 27 residues: Pregnancy-associated glycoprotein 62 (27 aa).

The protein belongs to the peptidase A1 family. Glycosylated. As to expression, placenta.

This is Pregnancy-associated glycoprotein 62 (PAG62) from Capra hircus (Goat).